The following is a 167-amino-acid chain: CGG triplet repeat-binding protein 1 (167 aa).

Serine 56 is subject to Phosphoserine. A disordered region spans residues 65–86 (KTHTKRKAEFEEQNVRKKQRPL). Positions 80-84 (RKKQR) match the Nuclear localization signal motif. Position 164 is a phosphoserine (serine 164).

It is found in the nucleus. Its function is as follows. Binds to nonmethylated 5'-d(CGG)(n)-3' trinucleotide repeats in the FMR1 promoter. May play a role in regulating FMR1 promoter. The polypeptide is CGG triplet repeat-binding protein 1 (Cggbp1) (Mus musculus (Mouse)).